The chain runs to 539 residues: MELRTVVATVESGEQDAVLKVLQIYNQEKSQCFTFDDEEREERKKMAQLLIKFLERELQPSCQVTCLESIRILSRDKYCLEPFTTEEGLKTLSRHAGIDYSEELIREVPDLEVILESLKCLCNIVFSSPRAQELTAEARLVVGLTKRIKLYNERSLPHEVKFFDLRLLFLLTALRVDIRQQLAQELRGISLMTDTLELTLGVKWMDPYEVATEEGLLPPLPRQETERAMEILKVLFNITFDSSKREVDEEDAALYRHLGALLRHCLMISADGEDRTEEFHSHTVNLLGNLPLKCLDVLLTPKVRPGSLEYMGVNMDAVNILLDFLERRLDRGHKLKESLTPVLNLLTESARVHRQTRKFLKAKVLPPLRDVKNRPEVGNSLRNKLVRLMTHIDTDVKHCAAEFLFVLCKESVSRFVKYTGYGNAAGLLAARGLMAGGREEGEYSEDEDTDTEEYKEAKPNINPVTGRVEEKLPNPMEGMTEEQKEYEAMKLVNMFDKLSREQVIQPMGITPSGNLAPMENAIRDMADERSSSDSDLGLD.

A disordered region spans residues 507 to 539 (MGITPSGNLAPMENAIRDMADERSSSDSDLGLD). Basic and acidic residues predominate over residues 521–532 (AIRDMADERSSS).

This sequence belongs to the synembryn family.

It is found in the cytoplasm. The protein localises to the cell cortex. In terms of biological role, chaperone that specifically binds and folds nascent G alpha proteins prior to G protein heterotrimer formation, promoting their stability and activity: folds GNAI1, GNAO1, GNA13 and GNAQ. Does not fold G(s) G-alpha proteins GNAS nor GNAL. Also acts as a guanine nucleotide exchange factor (GEF) for G alpha proteins by stimulating exchange of bound GDP for free GTP. This chain is Chaperone Ric-8A (RIC8A), found in Gallus gallus (Chicken).